We begin with the raw amino-acid sequence, 172 residues long: Putative Dresden prostate carcinoma protein 2 (172 aa).

The tract at residues 40–61 is disordered; that stretch reads QCEEEEAMTPRPTKARAPLPSA.

Very high expression in prostate and prostate cancer. Faint expression in other tissues.

In Homo sapiens (Human), this protein is Putative Dresden prostate carcinoma protein 2 (HMGN2P46).